Reading from the N-terminus, the 110-residue chain is Iron-sulfur cluster assembly protein CyaY (110 aa).

It belongs to the frataxin family.

Involved in iron-sulfur (Fe-S) cluster assembly. May act as a regulator of Fe-S biogenesis. The sequence is that of Iron-sulfur cluster assembly protein CyaY from Pseudomonas fluorescens (strain SBW25).